A 213-amino-acid polypeptide reads, in one-letter code: Kiwellin (213 aa).

The first 24 residues, methionine 1–serine 24, serve as a signal peptide directing secretion. Cystine bridges form between cysteine 28-cysteine 60, cysteine 32-cysteine 44, and cysteine 38-cysteine 49. 2 positions are modified to 4-hydroxyproline: proline 65 and proline 67. Intrachain disulfides connect cysteine 72/cysteine 90, cysteine 80/cysteine 172, cysteine 119/cysteine 144, and cysteine 166/cysteine 182. Residues serine 91 to glutamate 121 form a disordered region. Residues proline 93 to phenylalanine 107 are compositionally biased toward polar residues.

Belongs to the kiwellin family. In terms of processing, undergoes proteolytic cleavage by actinidin to produce kissper and KiTH. Three forms of KiTH are produced by cleavage at different sites.

It localises to the secreted. In terms of biological role, kissper is an anion-selective pore-forming peptide. The chain is Kiwellin from Actinidia chinensis var. chinensis (Chinese soft-hair kiwi).